A 975-amino-acid polypeptide reads, in one-letter code: Glycine dehydrogenase (decarboxylating) (975 aa).

The residue at position 723 (Lys-723) is an N6-(pyridoxal phosphate)lysine.

It belongs to the GcvP family. The glycine cleavage system is composed of four proteins: P, T, L and H. Requires pyridoxal 5'-phosphate as cofactor.

The catalysed reaction is N(6)-[(R)-lipoyl]-L-lysyl-[glycine-cleavage complex H protein] + glycine + H(+) = N(6)-[(R)-S(8)-aminomethyldihydrolipoyl]-L-lysyl-[glycine-cleavage complex H protein] + CO2. In terms of biological role, the glycine cleavage system catalyzes the degradation of glycine. The P protein binds the alpha-amino group of glycine through its pyridoxal phosphate cofactor; CO(2) is released and the remaining methylamine moiety is then transferred to the lipoamide cofactor of the H protein. This is Glycine dehydrogenase (decarboxylating) from Burkholderia orbicola (strain MC0-3).